A 569-amino-acid polypeptide reads, in one-letter code: Urease subunit alpha (569 aa).

Residues 132–569 (GGIDSHIHFI…LPLAQRYFLF (438 aa)) form the Urease domain. Ni(2+)-binding residues include H137, H139, and K220. K220 carries the post-translational modification N6-carboxylysine. A substrate-binding site is contributed by H222. 2 residues coordinate Ni(2+): H249 and H275. H323 serves as the catalytic Proton donor. Residue D363 coordinates Ni(2+).

Belongs to the metallo-dependent hydrolases superfamily. Urease alpha subunit family. Heterotrimer of UreA (gamma), UreB (beta) and UreC (alpha) subunits. Three heterotrimers associate to form the active enzyme. Requires Ni cation as cofactor. Post-translationally, carboxylation allows a single lysine to coordinate two nickel ions.

The protein localises to the cytoplasm. The catalysed reaction is urea + 2 H2O + H(+) = hydrogencarbonate + 2 NH4(+). It functions in the pathway nitrogen metabolism; urea degradation; CO(2) and NH(3) from urea (urease route): step 1/1. The chain is Urease subunit alpha from Dechloromonas aromatica (strain RCB).